Reading from the N-terminus, the 490-residue chain is Cysteine--tRNA ligase (490 aa).

Cysteine 36 is a Zn(2+) binding site. Positions 38 to 48 (VTVYDYSHIGH) match the 'HIGH' region motif. Positions 216, 241, and 245 each coordinate Zn(2+). The 'KMSKS' region signature appears at 278–282 (KMSKS). Lysine 281 is a binding site for ATP.

Belongs to the class-I aminoacyl-tRNA synthetase family. In terms of assembly, monomer. The cofactor is Zn(2+).

The protein localises to the cytoplasm. The enzyme catalyses tRNA(Cys) + L-cysteine + ATP = L-cysteinyl-tRNA(Cys) + AMP + diphosphate. The sequence is that of Cysteine--tRNA ligase from Magnetococcus marinus (strain ATCC BAA-1437 / JCM 17883 / MC-1).